Consider the following 595-residue polypeptide: Beta-(1--&gt;2)glucan export ATP-binding/permease protein NdvA (595 aa).

Residues 21–301 (SLLICSANVM…MSNFINLTIS (281 aa)) enclose the ABC transmembrane type-1 domain. 5 helical membrane-spanning segments follow: residues 22-42 (LLICSANVMLAIITIAEPILF), 55-75 (IIPTLTIWVCFGISHILAYVL), 129-149 (IWLDFMRQHLSTLVALFVLIP), 152-172 (FNMNWRLSIVLVVLAIIYVLI), and 248-268 (MASTISIVCVLLLGAFFVAKG). In terms of domain architecture, ABC transporter spans 335–569 (IQFHHVTYKF…GGRFYKLLKA (235 aa)). Residue 368-375 (GPTGAGKT) participates in ATP binding.

It belongs to the ABC transporter superfamily. Beta-(1--&gt;2)glucan exporter (TC 3.A.1.108.1) family. In terms of assembly, homodimer.

The protein resides in the cell inner membrane. The catalysed reaction is [(1-&gt;2)-beta-D-glucosyl](n)(in) + ATP + H2O = [(1-&gt;2)-beta-D-glucosyl](n)(out) + ADP + phosphate + H(+). Involved in beta-(1--&gt;2)glucan export. Transmembrane domains (TMD) form a pore in the inner membrane and the ATP-binding domain (NBD) is responsible for energy generation. This is Beta-(1--&gt;2)glucan export ATP-binding/permease protein NdvA from Bartonella henselae (strain ATCC 49882 / DSM 28221 / CCUG 30454 / Houston 1) (Rochalimaea henselae).